The sequence spans 332 residues: Invasin IpaD (332 aa).

Positions 1 to 25 are enriched in low complexity; that stretch reads MNITTLTNSISTSSFSPNNTNGSST. Residues 1 to 43 form a disordered region; it reads MNITTLTNSISTSSFSPNNTNGSSTETVNSDIKTTTSSHPVSS. A compositionally biased stretch (polar residues) spans 26–43; the sequence is ETVNSDIKTTTSSHPVSS. The stretch at 44–77 forms a coiled coil; that stretch reads LTMLNDTLHNIRTTNQALKKELSQKTLTKTSLEE. An ipaB binding region spans residues 192 to 267; the sequence is VNSLKKALEE…KSLDNLGGNG (76 aa).

This sequence belongs to the invasin protein D family.

It is found in the secreted. Its function is as follows. Required for bacterial invasion of host cells. Controls IpaB and IpaC secretion, and the efficiency with which they are physically inserted into target cell membranes. These proteins are exported via T3SS to form a pore in the host membrane that allows the translocation of the other effectors into the host cytoplasm. Along with IpaB, is essential for both blocking secretion through the Mxi/Spa translocon in the absence of a secretion-inducing signal, and for controlling the level of secretion in the presence of this signal. This is Invasin IpaD (ipaD) from Shigella flexneri.